The chain runs to 375 residues: Chaperone protein DnaJ (375 aa).

Residues 5 to 70 (DYYEVLGVAR…NKRRAYDAHG (66 aa)) enclose the J domain. The CR-type zinc finger occupies 131-208 (GIERRIEIPT…CHGAGRVEED (78 aa)). Positions 144, 147, 160, 163, 182, 185, 196, and 199 each coordinate Zn(2+). CXXCXGXG motif repeat units lie at residues 144 to 151 (CAPCHGSG), 160 to 167 (CGTCHGRG), 182 to 189 (CPHCDGRG), and 196 to 203 (CKTCHGAG).

The protein belongs to the DnaJ family. Homodimer. It depends on Zn(2+) as a cofactor.

It localises to the cytoplasm. Participates actively in the response to hyperosmotic and heat shock by preventing the aggregation of stress-denatured proteins and by disaggregating proteins, also in an autonomous, DnaK-independent fashion. Unfolded proteins bind initially to DnaJ; upon interaction with the DnaJ-bound protein, DnaK hydrolyzes its bound ATP, resulting in the formation of a stable complex. GrpE releases ADP from DnaK; ATP binding to DnaK triggers the release of the substrate protein, thus completing the reaction cycle. Several rounds of ATP-dependent interactions between DnaJ, DnaK and GrpE are required for fully efficient folding. Also involved, together with DnaK and GrpE, in the DNA replication of plasmids through activation of initiation proteins. This is Chaperone protein DnaJ from Xanthomonas axonopodis pv. citri (strain 306).